The primary structure comprises 689 residues: Elongation factor G (689 aa).

In terms of domain architecture, tr-type G spans 8-282; it reads LNTRNIGIMA…AVVDYLPSPI (275 aa). GTP-binding positions include 17-24, 81-85, and 135-138; these read AHIDAGKT, DTPGH, and NKMD.

It belongs to the TRAFAC class translation factor GTPase superfamily. Classic translation factor GTPase family. EF-G/EF-2 subfamily.

The protein localises to the cytoplasm. In terms of biological role, catalyzes the GTP-dependent ribosomal translocation step during translation elongation. During this step, the ribosome changes from the pre-translocational (PRE) to the post-translocational (POST) state as the newly formed A-site-bound peptidyl-tRNA and P-site-bound deacylated tRNA move to the P and E sites, respectively. Catalyzes the coordinated movement of the two tRNA molecules, the mRNA and conformational changes in the ribosome. In Mycoplasma capricolum subsp. capricolum (strain California kid / ATCC 27343 / NCTC 10154), this protein is Elongation factor G.